Here is a 719-residue protein sequence, read N- to C-terminus: DNA topoisomerase 1 (719 aa).

Residues 6–137 enclose the Toprim domain; that stretch reads SKILVIESPN…NVNKCKRIIF (132 aa). Mg(2+) contacts are provided by Glu12 and Asp106. A Topo IA-type catalytic domain is found at 156–601; the sequence is QKDWVSSQIT…AFWNDFSEVL (446 aa). An interaction with DNA region spans residues 189–194; sequence SAGRVQ. The active-site O-(5'-phospho-DNA)-tyrosine intermediate is Tyr334. 2 C4-type zinc fingers span residues 620-646 and 667-699; these read CPNC…FPKC and CELC…FPKC.

Belongs to the type IA topoisomerase family. As to quaternary structure, monomer. Requires Mg(2+) as cofactor.

The enzyme catalyses ATP-independent breakage of single-stranded DNA, followed by passage and rejoining.. Releases the supercoiling and torsional tension of DNA, which is introduced during the DNA replication and transcription, by transiently cleaving and rejoining one strand of the DNA duplex. Introduces a single-strand break via transesterification at a target site in duplex DNA. The scissile phosphodiester is attacked by the catalytic tyrosine of the enzyme, resulting in the formation of a DNA-(5'-phosphotyrosyl)-enzyme intermediate and the expulsion of a 3'-OH DNA strand. The free DNA strand then undergoes passage around the unbroken strand, thus removing DNA supercoils. Finally, in the religation step, the DNA 3'-OH attacks the covalent intermediate to expel the active-site tyrosine and restore the DNA phosphodiester backbone. The protein is DNA topoisomerase 1 of Mycoplasmoides gallisepticum (strain R(low / passage 15 / clone 2)) (Mycoplasma gallisepticum).